The chain runs to 416 residues: Proline-serine-threonine phosphatase-interacting protein 1 (416 aa).

One can recognise an F-BAR domain in the interval leucine 5–aspartate 264. The stretch at histidine 166–threonine 212 forms a coiled coil. Serine 318 carries the post-translational modification Phosphoserine. At tyrosine 345 the chain carries Phosphotyrosine. The SH3 domain occupies serine 359–leucine 416.

As to quaternary structure, homodimer. Homotrimer. Interacts (via coiled-coil domain) with CD2AP, PTPN12 and PTPN18. Interacts (via SH3 domain) with ABL1 and WAS. Interacts (via SH3 and coiled-coil domains) with MEFV (via B-box zinc finger); the interaction allows binding of MEFV to PYCARD and facilitates formation of PYCARD pyroptosomes. Interacts with CD2, DNM2 and FASLG. In terms of processing, dephosphorylated on Tyr-345 by PTPN18, this event negatively regulates the association of PSTPIP1 with SH2 domain-containing proteins as tyrosine kinase. Phosphorylation of Tyr-345 is probably required for subsequent phosphorylation at other tyrosine residues. Phosphorylation is induced by activation of the EGFR and PDGFR in a ABL1 dependent manner. The phosphorylation regulates the interaction with WAS and with MEFV. As to expression, highly expressed in the peripheral blood leukocytes, granulocytes and monocytes, namely in T-cells and natural killer cells, and in spleen. Weakly expressed in the thymus, small intestine, lung and placenta.

It is found in the cytoplasm. The protein resides in the cell membrane. Its subcellular location is the cell projection. The protein localises to the uropodium. It localises to the cytoskeleton. It is found in the perinuclear region. The protein resides in the lamellipodium. Its subcellular location is the cleavage furrow. Involved in regulation of the actin cytoskeleton. May regulate WAS actin-bundling activity. Bridges the interaction between ABL1 and PTPN18 leading to ABL1 dephosphorylation. May play a role as a scaffold protein between PTPN12 and WAS and allow PTPN12 to dephosphorylate WAS. Has the potential to physically couple CD2 and CD2AP to WAS. Acts downstream of CD2 and CD2AP to recruit WAS to the T-cell:APC contact site so as to promote the actin polymerization required for synapse induction during T-cell activation. Down-regulates CD2-stimulated adhesion through the coupling of PTPN12 to CD2. Also has a role in innate immunity and the inflammatory response. Recruited to inflammasomes by MEFV. Induces formation of pyroptosomes, large supramolecular structures composed of oligomerized PYCARD dimers which form prior to inflammatory apoptosis. Binding to MEFV allows MEFV to bind to PYCARD and facilitates pyroptosome formation. Regulates endocytosis and cell migration in neutrophils. In Homo sapiens (Human), this protein is Proline-serine-threonine phosphatase-interacting protein 1 (PSTPIP1).